Reading from the N-terminus, the 420-residue chain is Ammonium transporter Amt2 (420 aa).

11 consecutive transmembrane segments (helical) span residues 34–54 (VFFL…FAML), 71–91 (NMVD…ILCS), 120–140 (SWFF…GGVA), 149–169 (VLIS…LGPW), 180–200 (AGSL…IAAL), 220–240 (IPMA…FNVG), 250–270 (GLVC…ALIA), 273–293 (NDVL…CSGT), 295–315 (VVSP…VPIV), 339–359 (VIGA…AGGV), and 365–385 (IIGA…LAKI).

The protein belongs to the ammonia transporter channel (TC 1.A.11.2) family. As to quaternary structure, homotrimer. Interacts and forms a complex with GlnK2.

It localises to the cell membrane. Functionally, involved in the uptake of ammonium/ammonia (NH(4)(+)/NH(3)). Transport is electrogenic. In Methanocaldococcus jannaschii (strain ATCC 43067 / DSM 2661 / JAL-1 / JCM 10045 / NBRC 100440) (Methanococcus jannaschii), this protein is Ammonium transporter Amt2.